The following is a 315-amino-acid chain: Eukaryotic translation initiation factor 2 subunit 1 (315 aa).

One can recognise an S1 motif domain in the interval 17–88 (EDVVMVNVRS…EKGYIDLSKR (72 aa)). Phosphoserine occurs at positions 49 and 52. The interval 292–315 (RLERENAEVDGDDDAEEMEAKTED) is disordered. Residues 299 to 308 (EVDGDDDAEE) are compositionally biased toward acidic residues.

This sequence belongs to the eIF-2-alpha family. In terms of assembly, eukaryotic translation initiation factor 2 eIF2 is a heterotrimeric complex composed of an alpha (EIF2S1), a beta (EIF2S2) and a gamma (EIF2S3) chain. Phosphorylation at Ser-49 and Ser-52 stabilizes the eIF-2/GDP/eIF2B complex and prevents GDP/GTP exchange reaction, thus impairing the recycling of eIF-2 between successive rounds of initiation and leading to global inhibition of translation, while concomitantly initiating the preferential translation of integrated stress response (ISR)-specific mRNAs.

It localises to the cytoplasm. Its subcellular location is the stress granule. The protein resides in the cytosol. Activity is regulated by phosphorylation at Ser-49 and Ser-52, which stabilizes the eIF2/GDP/eIF2B complex and prevents the eIF2B-mediated exchange of GDP for GTP, thereby preventing the formation of the 43S pre-initiation complex (43S PIC). This results in the global attenuation of 5' cap-dependent protein synthesis and concomitant translation of ISR-specific mRNAs that contain a short upstream open reading frame (uORF) in their 5' UTR. Its function is as follows. Member of the eIF2 complex that functions in the early steps of protein synthesis by forming a ternary complex with GTP and initiator tRNA. This complex binds to a 40S ribosomal subunit, followed by mRNA binding to form a 43S pre-initiation complex. Junction of the 60S ribosomal subunit to form the 80S initiation complex is preceded by hydrolysis of the GTP bound to eIF2 and release of an eIF2-GDP binary complex. In order for eIF2 to recycle and catalyze another round of initiation, the GDP bound to eIF2 must exchange with GTP by way of a reaction catalyzed by eIF2B. EIF2S1/eIF2-alpha is a key component of the integrated stress response (ISR), required for adaptation to various stress: phosphorylation by metabolic-stress sensing protein kinases (EIF2AK1/HRI, EIF2AK2/PKR, EIF2AK3/PERK and EIF2AK4/GCN2) in response to stress converts EIF2S1/eIF2-alpha in a global protein synthesis inhibitor, leading to a attenuation of cap-dependent translation, while concomitantly initiating the preferential translation of ISR-specific mRNAs, such as the transcriptional activators ATF4 and QRICH1. The polypeptide is Eukaryotic translation initiation factor 2 subunit 1 (EIF2S1) (Gallus gallus (Chicken)).